A 456-amino-acid polypeptide reads, in one-letter code: Putrescine--pyruvate aminotransferase (456 aa).

Tyrosine 156 provides a ligand contact to substrate. Aspartate 262 serves as a coordination point for pyridoxal 5'-phosphate. Lysine 291 carries the post-translational modification N6-(pyridoxal phosphate)lysine. Residues glycine 322 and arginine 417 each coordinate substrate.

Belongs to the class-III pyridoxal-phosphate-dependent aminotransferase family. Requires pyridoxal 5'-phosphate as cofactor.

It carries out the reaction putrescine + pyruvate = 4-aminobutanal + L-alanine. Its pathway is amine and polyamine degradation; putrescine degradation; 4-aminobutanal from putrescine (transaminase route). Involved in the putrescine catabolism. Catalyzes the transfer of the amino group from putrescine to pyruvate to yield 4-aminobutanal and alanine. This is Putrescine--pyruvate aminotransferase from Pseudomonas aeruginosa (strain ATCC 15692 / DSM 22644 / CIP 104116 / JCM 14847 / LMG 12228 / 1C / PRS 101 / PAO1).